Reading from the N-terminus, the 338-residue chain is Lipoate-protein ligase A (338 aa).

Residues 29 to 216 (SPDQRVLFLW…AFFAYYDEQV (188 aa)) form the BPL/LPL catalytic domain. ATP is bound by residues Arg71, 76 to 79 (GAVF), and Lys134. Lys134 is a (R)-lipoate binding site.

Belongs to the LplA family. In terms of assembly, monomer.

Its subcellular location is the cytoplasm. It catalyses the reaction L-lysyl-[lipoyl-carrier protein] + (R)-lipoate + ATP = N(6)-[(R)-lipoyl]-L-lysyl-[lipoyl-carrier protein] + AMP + diphosphate + H(+). It functions in the pathway protein modification; protein lipoylation via exogenous pathway; protein N(6)-(lipoyl)lysine from lipoate: step 1/2. Its pathway is protein modification; protein lipoylation via exogenous pathway; protein N(6)-(lipoyl)lysine from lipoate: step 2/2. Functionally, catalyzes both the ATP-dependent activation of exogenously supplied lipoate to lipoyl-AMP and the transfer of the activated lipoyl onto the lipoyl domains of lipoate-dependent enzymes. The chain is Lipoate-protein ligase A from Yersinia pseudotuberculosis serotype IB (strain PB1/+).